The sequence spans 959 residues: Oxysterol-binding protein-related protein 6 (959 aa).

Residues 1–60 (MSSDEKGISPAHKTSTPTHRSASSSTSSQRESRQSIHVLERTASSSTEPSVSRQLLEPEP) are disordered. An N-acetylserine modification is found at Ser2. Residues 14 to 29 (TSTPTHRSASSSTSSQ) show a composition bias toward low complexity. Over residues 30 to 40 (RESRQSIHVLE) the composition is skewed to basic and acidic residues. Phosphoserine is present on Ser35. Residues 42 to 53 (TASSSTEPSVSR) are compositionally biased toward polar residues. The region spanning 86 to 181 (PDRHEGFMLK…WVSKLRHHRL (96 aa)) is the PH domain. A phosphoserine mark is found at Ser190 and Ser290.

It belongs to the OSBP family. As to quaternary structure, homodimer. Interacts with OSBPL3. In terms of tissue distribution, expressed in skin, respiratory epithelium, small intestine epithelium, pancreas, striated muscle, brain, spinal ganglia, and nervous plexus of the intestine (at protein level). In the brain, specifically in the cerebellum, it is expressed in Purkinje and granule cells. Expressed in hepatocytes and macrophages.

The protein localises to the nucleus envelope. Its subcellular location is the cytoplasm. It is found in the cytosol. The protein resides in the endoplasmic reticulum membrane. It localises to the cell membrane. The protein localises to the endosome membrane. Its function is as follows. Regulates cellular transport and efflux of cholesterol. Plays a role in phosphatidylinositol-4-phophate (PI4P) turnover at the neuronal membrane. Binds via its PH domain PI4P, phosphatidylinositol-4,5-diphosphate, phosphatidylinositol-3,4,5-triphosphate, and phosphatidic acid. Weakly binds 25-hydroxycholesterol. The chain is Oxysterol-binding protein-related protein 6 (Osbpl6) from Mus musculus (Mouse).